The chain runs to 430 residues: Enolase (430 aa).

Q162 lines the (2R)-2-phosphoglycerate pocket. The active-site Proton donor is E204. Mg(2+) is bound by residues D241, E283, and D310. K335, R364, S365, and K386 together coordinate (2R)-2-phosphoglycerate. K335 serves as the catalytic Proton acceptor.

This sequence belongs to the enolase family. Requires Mg(2+) as cofactor.

It localises to the cytoplasm. It is found in the secreted. The protein resides in the cell surface. The catalysed reaction is (2R)-2-phosphoglycerate = phosphoenolpyruvate + H2O. It functions in the pathway carbohydrate degradation; glycolysis; pyruvate from D-glyceraldehyde 3-phosphate: step 4/5. Its function is as follows. Catalyzes the reversible conversion of 2-phosphoglycerate (2-PG) into phosphoenolpyruvate (PEP). It is essential for the degradation of carbohydrates via glycolysis. The polypeptide is Enolase (Mycobacteroides abscessus (strain ATCC 19977 / DSM 44196 / CCUG 20993 / CIP 104536 / JCM 13569 / NCTC 13031 / TMC 1543 / L948) (Mycobacterium abscessus)).